The following is a 275-amino-acid chain: Nitrogenase iron protein 1 (275 aa).

ATP is bound at residue 9–16; the sequence is GKGGIGKS. Cysteine 98 is a [4Fe-4S] cluster binding site. Arginine 101 carries the ADP-ribosylarginine; by dinitrogenase reductase ADP-ribosyltransferase modification. Cysteine 132 provides a ligand contact to [4Fe-4S] cluster.

Belongs to the NifH/BchL/ChlL family. As to quaternary structure, homodimer. Requires [4Fe-4S] cluster as cofactor. Post-translationally, the reversible ADP-ribosylation of Arg-101 inactivates the nitrogenase reductase and regulates nitrogenase activity.

The catalysed reaction is N2 + 8 reduced [2Fe-2S]-[ferredoxin] + 16 ATP + 16 H2O = H2 + 8 oxidized [2Fe-2S]-[ferredoxin] + 2 NH4(+) + 16 ADP + 16 phosphate + 6 H(+). The key enzymatic reactions in nitrogen fixation are catalyzed by the nitrogenase complex, which has 2 components: the iron protein and the molybdenum-iron protein. The chain is Nitrogenase iron protein 1 (nifH1) from Methanobacterium ivanovii.